We begin with the raw amino-acid sequence, 308 residues long: Bifunctional protein FolD (308 aa).

NADP(+)-binding positions include 171–173 (GRS), Ser-198, and Ile-239.

The protein belongs to the tetrahydrofolate dehydrogenase/cyclohydrolase family. As to quaternary structure, homodimer.

It catalyses the reaction (6R)-5,10-methylene-5,6,7,8-tetrahydrofolate + NADP(+) = (6R)-5,10-methenyltetrahydrofolate + NADPH. The catalysed reaction is (6R)-5,10-methenyltetrahydrofolate + H2O = (6R)-10-formyltetrahydrofolate + H(+). Its pathway is one-carbon metabolism; tetrahydrofolate interconversion. In terms of biological role, catalyzes the oxidation of 5,10-methylenetetrahydrofolate to 5,10-methenyltetrahydrofolate and then the hydrolysis of 5,10-methenyltetrahydrofolate to 10-formyltetrahydrofolate. The chain is Bifunctional protein FolD from Borreliella burgdorferi (strain ZS7) (Borrelia burgdorferi).